The primary structure comprises 238 residues: Ion-translocating oxidoreductase complex subunit E (238 aa).

Helical transmembrane passes span 20 to 40 (ALVQLLGLCPLLAVSSSVVNA), 41 to 61 (LGLGIATLLVLVISNSFVSLI), 72 to 92 (PAFVMIIASAVTCTELLMKAF), 95 to 115 (ELYQILGLFIPLIVTNCAVLG), 130 to 150 (AVDGFMMGLGFMLVLVAVGAV), and 185 to 205 (NVIFALLPPGAFIVVGMLIAA).

The protein belongs to the NqrDE/RnfAE family. As to quaternary structure, the complex is composed of six subunits: RnfA, RnfB, RnfC, RnfD, RnfE and RnfG.

It is found in the cell inner membrane. Functionally, part of a membrane-bound complex that couples electron transfer with translocation of ions across the membrane. The protein is Ion-translocating oxidoreductase complex subunit E of Cellvibrio japonicus (strain Ueda107) (Pseudomonas fluorescens subsp. cellulosa).